The chain runs to 251 residues: DNA repair protein RecO (251 aa).

This sequence belongs to the RecO family.

Its function is as follows. Involved in DNA repair and RecF pathway recombination. The protein is DNA repair protein RecO of Lactococcus lactis subsp. cremoris (strain SK11).